We begin with the raw amino-acid sequence, 158 residues long: 6,7-dimethyl-8-ribityllumazine synthase (158 aa).

Residues F23, 61 to 63 (SFE), and 85 to 87 (AVI) contribute to the 5-amino-6-(D-ribitylamino)uracil site. Residue 90–91 (ET) participates in (2S)-2-hydroxy-3-oxobutyl phosphate binding. H93 serves as the catalytic Proton donor. Residue F118 coordinates 5-amino-6-(D-ribitylamino)uracil. (2S)-2-hydroxy-3-oxobutyl phosphate is bound at residue R132.

It belongs to the DMRL synthase family.

The catalysed reaction is (2S)-2-hydroxy-3-oxobutyl phosphate + 5-amino-6-(D-ribitylamino)uracil = 6,7-dimethyl-8-(1-D-ribityl)lumazine + phosphate + 2 H2O + H(+). The protein operates within cofactor biosynthesis; riboflavin biosynthesis; riboflavin from 2-hydroxy-3-oxobutyl phosphate and 5-amino-6-(D-ribitylamino)uracil: step 1/2. Functionally, catalyzes the formation of 6,7-dimethyl-8-ribityllumazine by condensation of 5-amino-6-(D-ribitylamino)uracil with 3,4-dihydroxy-2-butanone 4-phosphate. This is the penultimate step in the biosynthesis of riboflavin. This Prochlorococcus marinus (strain MIT 9215) protein is 6,7-dimethyl-8-ribityllumazine synthase.